We begin with the raw amino-acid sequence, 400 residues long: Formate-dependent phosphoribosylglycinamide formyltransferase (400 aa).

N(1)-(5-phospho-beta-D-ribosyl)glycinamide-binding positions include 22–23 and Glu-82; that span reads EL. Residues Arg-114, Lys-155, 160–165, 195–198, and Glu-203 contribute to the ATP site; these read SSGKGQ and EGFV. The ATP-grasp domain maps to 119–308; that stretch reads RLAAEELGLS…EFALHARALL (190 aa). Positions 267 and 279 each coordinate Mg(2+). Residues Asp-286, Lys-356, and 363 to 364 contribute to the N(1)-(5-phospho-beta-D-ribosyl)glycinamide site; that span reads RR.

The protein belongs to the PurK/PurT family. In terms of assembly, homodimer.

The enzyme catalyses N(1)-(5-phospho-beta-D-ribosyl)glycinamide + formate + ATP = N(2)-formyl-N(1)-(5-phospho-beta-D-ribosyl)glycinamide + ADP + phosphate + H(+). It functions in the pathway purine metabolism; IMP biosynthesis via de novo pathway; N(2)-formyl-N(1)-(5-phospho-D-ribosyl)glycinamide from N(1)-(5-phospho-D-ribosyl)glycinamide (formate route): step 1/1. In terms of biological role, involved in the de novo purine biosynthesis. Catalyzes the transfer of formate to 5-phospho-ribosyl-glycinamide (GAR), producing 5-phospho-ribosyl-N-formylglycinamide (FGAR). Formate is provided by PurU via hydrolysis of 10-formyl-tetrahydrofolate. In Hahella chejuensis (strain KCTC 2396), this protein is Formate-dependent phosphoribosylglycinamide formyltransferase.